A 264-amino-acid polypeptide reads, in one-letter code: Thymidylate synthase (264 aa).

A dUMP-binding site is contributed by Arg-21. His-51 is a (6R)-5,10-methylene-5,6,7,8-tetrahydrofolate binding site. 126–127 (RR) is a binding site for dUMP. Cys-146 functions as the Nucleophile in the catalytic mechanism. Residues 166–169 (RSAD), Asn-177, and 207–209 (HIY) each bind dUMP. A (6R)-5,10-methylene-5,6,7,8-tetrahydrofolate-binding site is contributed by Asp-169. Ala-263 contributes to the (6R)-5,10-methylene-5,6,7,8-tetrahydrofolate binding site.

The protein belongs to the thymidylate synthase family. Bacterial-type ThyA subfamily. As to quaternary structure, homodimer.

It is found in the cytoplasm. It carries out the reaction dUMP + (6R)-5,10-methylene-5,6,7,8-tetrahydrofolate = 7,8-dihydrofolate + dTMP. It functions in the pathway pyrimidine metabolism; dTTP biosynthesis. In terms of biological role, catalyzes the reductive methylation of 2'-deoxyuridine-5'-monophosphate (dUMP) to 2'-deoxythymidine-5'-monophosphate (dTMP) while utilizing 5,10-methylenetetrahydrofolate (mTHF) as the methyl donor and reductant in the reaction, yielding dihydrofolate (DHF) as a by-product. This enzymatic reaction provides an intracellular de novo source of dTMP, an essential precursor for DNA biosynthesis. This chain is Thymidylate synthase, found in Coxiella burnetii (strain Dugway 5J108-111).